The chain runs to 46 residues: Endochitinase 4 (46 aa).

The protein belongs to the glycosyl hydrolase 19 family. Chitinase class I subfamily.

It catalyses the reaction Random endo-hydrolysis of N-acetyl-beta-D-glucosaminide (1-&gt;4)-beta-linkages in chitin and chitodextrins.. Functionally, defense against chitin-containing fungal and bacterial pathogens. The protein is Endochitinase 4 of Arachis hypogaea (Peanut).